A 179-amino-acid polypeptide reads, in one-letter code: Protein GrpE (179 aa).

The interval 1–23 (MSEEIKEQNVQDAQNENLAPDSV) is disordered.

The protein belongs to the GrpE family. As to quaternary structure, homodimer.

It localises to the cytoplasm. Functionally, participates actively in the response to hyperosmotic and heat shock by preventing the aggregation of stress-denatured proteins, in association with DnaK and GrpE. It is the nucleotide exchange factor for DnaK and may function as a thermosensor. Unfolded proteins bind initially to DnaJ; upon interaction with the DnaJ-bound protein, DnaK hydrolyzes its bound ATP, resulting in the formation of a stable complex. GrpE releases ADP from DnaK; ATP binding to DnaK triggers the release of the substrate protein, thus completing the reaction cycle. Several rounds of ATP-dependent interactions between DnaJ, DnaK and GrpE are required for fully efficient folding. This is Protein GrpE from Campylobacter curvus (strain 525.92).